Here is a 689-residue protein sequence, read N- to C-terminus: Beta-adrenergic receptor kinase 1 (689 aa).

The segment at 1–190 (MADLEAVLAD…ELNIHLTMND (190 aa)) is N-terminal. An RGS domain is found at 54–175 (TFEKIFSQKL…IESDKFTRFC (122 aa)). Residues 191 to 453 (FSVHRIIGRG…AQEVKESPFF (263 aa)) form the Protein kinase domain. ATP-binding positions include 197–205 (IGRGGFGEV) and K220. The active-site Proton acceptor is D317. Residues 454–521 (RSLDWQMVFL…TISERWQQEV (68 aa)) enclose the AGC-kinase C-terminal domain. Residues 558 to 652 (DCIMHGYMSK…WKKELRDAYR (95 aa)) form the PH domain. Residue S670 is modified to Phosphoserine.

The protein belongs to the protein kinase superfamily. AGC Ser/Thr protein kinase family. GPRK subfamily. Interacts with the heterodimer formed by GNB1 and GNG2. Interacts with GIT1. Interacts with, and phosphorylates chemokine-stimulated CCR5. Interacts with ARRB1. Interacts with LPAR1 and LPAR2. Interacts with RALA in response to LPAR1 activation. ADRBK1 and RALA mutually inhibit each other's binding to LPAR1. Interacts with ADRB2.

Its subcellular location is the cytoplasm. It localises to the cell membrane. The protein resides in the postsynapse. The protein localises to the presynapse. The catalysed reaction is [beta-adrenergic receptor] + ATP = [beta-adrenergic receptor]-phosphate + ADP + H(+). With respect to regulation, in contrast to other AGC family kinases, the catalytic activity is solely regulated by the binding of substrates and ligands, not by phosphorylation of the kinase domain. Its function is as follows. Specifically phosphorylates the agonist-occupied form of the beta-adrenergic and closely related receptors, probably inducing a desensitization of them. Key regulator of LPAR1 signaling. Competes with RALA for binding to LPAR1 thus affecting the signaling properties of the receptor. Desensitizes LPAR1 and LPAR2 in a phosphorylation-independent manner. Positively regulates ciliary smoothened (SMO)-dependent Hedgehog (Hh) signaling pathway by facilitating the trafficking of SMO into the cilium and the stimulation of SMO activity. Inhibits relaxation of airway smooth muscle in response to blue light. This chain is Beta-adrenergic receptor kinase 1, found in Mesocricetus auratus (Golden hamster).